A 545-amino-acid chain; its full sequence is Thermosome subunit (545 aa).

It belongs to the TCP-1 chaperonin family. In terms of assembly, forms an oligomeric complex of eight-membered rings.

Its function is as follows. Molecular chaperone; binds unfolded polypeptides in vitro, and has a weak ATPase activity. This Desulfurococcus sp. (strain SY) protein is Thermosome subunit (ths).